A 138-amino-acid chain; its full sequence is Cysteine desulfuration protein SufE (138 aa).

Residue Cys-51 is the Cysteine persulfide intermediate of the active site.

The protein belongs to the SufE family. In terms of assembly, homodimer. Interacts with SufS.

It localises to the cytoplasm. The protein operates within cofactor biosynthesis; iron-sulfur cluster biosynthesis. Participates in cysteine desulfuration mediated by SufS. Cysteine desulfuration mobilizes sulfur from L-cysteine to yield L-alanine and constitutes an essential step in sulfur metabolism for biosynthesis of a variety of sulfur-containing biomolecules. Functions as a sulfur acceptor for SufS, by mediating the direct transfer of the sulfur atom from the S-sulfanylcysteine of SufS, an intermediate product of cysteine desulfuration process. This is Cysteine desulfuration protein SufE from Shigella sonnei (strain Ss046).